Consider the following 157-residue polypeptide: SsrA-binding protein (157 aa).

The protein belongs to the SmpB family.

It is found in the cytoplasm. Functionally, required for rescue of stalled ribosomes mediated by trans-translation. Binds to transfer-messenger RNA (tmRNA), required for stable association of tmRNA with ribosomes. tmRNA and SmpB together mimic tRNA shape, replacing the anticodon stem-loop with SmpB. tmRNA is encoded by the ssrA gene; the 2 termini fold to resemble tRNA(Ala) and it encodes a 'tag peptide', a short internal open reading frame. During trans-translation Ala-aminoacylated tmRNA acts like a tRNA, entering the A-site of stalled ribosomes, displacing the stalled mRNA. The ribosome then switches to translate the ORF on the tmRNA; the nascent peptide is terminated with the 'tag peptide' encoded by the tmRNA and targeted for degradation. The ribosome is freed to recommence translation, which seems to be the essential function of trans-translation. The sequence is that of SsrA-binding protein from Syntrophomonas wolfei subsp. wolfei (strain DSM 2245B / Goettingen).